A 244-amino-acid polypeptide reads, in one-letter code: MSDYVIECHNLETAYVGSLNRPILNEISCHIKQGEFVVLLGLNGAGKSTLLRSLVGLVPLVRGEVHINGVAMNSRILPQIRRDVGMLFQGGGLIPQLSAIENVLCGRLGTRTTWQTLFGFPKRDRLLALELLEQLGLRELAYQKTSKLSGGQQQRVAIARALIQSPQILLADEPTTGLDVIATQQVMETLAELHAQQGMTVIAVLHDLGIAARYAQRAIILDAGRIVYEGSCDNLQAQFVVNNQ.

In terms of domain architecture, ABC transporter spans 6–244 (IECHNLETAY…LQAQFVVNNQ (239 aa)). 41-48 (GLNGAGKS) contacts ATP.

Belongs to the ABC transporter superfamily. Phosphonates importer (TC 3.A.1.9.1) family. The complex is composed of two ATP-binding proteins (PhnC), two transmembrane proteins (PhnE) and a solute-binding protein (PhnD).

Its subcellular location is the cell inner membrane. It catalyses the reaction phosphonate(out) + ATP + H2O = phosphonate(in) + ADP + phosphate + H(+). In terms of biological role, part of the ABC transporter complex PhnCDE involved in phosphonates import. Responsible for energy coupling to the transport system. In Nostoc sp. (strain PCC 7120 / SAG 25.82 / UTEX 2576), this protein is Phosphonates import ATP-binding protein PhnC 2.